Consider the following 155-residue polypeptide: S-ribosylhomocysteine lyase (155 aa).

The Fe cation site is built by His58, His62, and Cys125.

This sequence belongs to the LuxS family. In terms of assembly, homodimer. Fe cation is required as a cofactor.

It carries out the reaction S-(5-deoxy-D-ribos-5-yl)-L-homocysteine = (S)-4,5-dihydroxypentane-2,3-dione + L-homocysteine. Involved in the synthesis of autoinducer 2 (AI-2) which is secreted by bacteria and is used to communicate both the cell density and the metabolic potential of the environment. The regulation of gene expression in response to changes in cell density is called quorum sensing. Catalyzes the transformation of S-ribosylhomocysteine (RHC) to homocysteine (HC) and 4,5-dihydroxy-2,3-pentadione (DPD). The chain is S-ribosylhomocysteine lyase from Chromohalobacter salexigens (strain ATCC BAA-138 / DSM 3043 / CIP 106854 / NCIMB 13768 / 1H11).